The sequence spans 40 residues: Biotin carboxylase (40 aa).

Residues 1–40 form the Biotin carboxylation domain; it reads ILVANRGEIAVRLLEEAPSPALTPELRITAYLPSGGPFVR. The ATP-grasp domain maps to 13-27; the sequence is LLEEAPSPALTPELR.

As to quaternary structure, acetyl-CoA carboxylase is a heterohexamer of biotin carboxyl carrier protein, biotin carboxylase and the two subunits of carboxyl transferase in a 2:2 complex. Requires Mg(2+) as cofactor. Mn(2+) is required as a cofactor.

The catalysed reaction is N(6)-biotinyl-L-lysyl-[protein] + hydrogencarbonate + ATP = N(6)-carboxybiotinyl-L-lysyl-[protein] + ADP + phosphate + H(+). It participates in lipid metabolism; malonyl-CoA biosynthesis; malonyl-CoA from acetyl-CoA: step 1/1. This protein is a component of the acetyl coenzyme A carboxylase complex; first, biotin carboxylase catalyzes the carboxylation of the carrier protein and then the transcarboxylase transfers the carboxyl group to form malonyl-CoA. The polypeptide is Biotin carboxylase (Populus euphratica (Euphrates poplar)).